A 408-amino-acid chain; its full sequence is Peptidase T (408 aa).

Zn(2+) is bound at residue His78. Asp80 is a catalytic residue. Asp140 is a Zn(2+) binding site. Glu174 (proton acceptor) is an active-site residue. Positions 175, 197, and 379 each coordinate Zn(2+).

The protein belongs to the peptidase M20B family. The cofactor is Zn(2+).

Its subcellular location is the cytoplasm. The enzyme catalyses Release of the N-terminal residue from a tripeptide.. Cleaves the N-terminal amino acid of tripeptides. The chain is Peptidase T from Staphylococcus aureus (strain MRSA252).